The chain runs to 397 residues: Succinate--CoA ligase [ADP-forming] subunit beta (397 aa).

Residues 9 to 254 form the ATP-grasp domain; sequence KALLKGYGAP…ETEEDAKEIE (246 aa). Residues Lys46, 53-55, Glu109, Ala112, and Glu117 each bind ATP; that span reads GRG. Residues Asn209 and Asp223 each coordinate Mg(2+). Substrate contacts are provided by residues Asn274 and 331–333; that span reads GIM.

Belongs to the succinate/malate CoA ligase beta subunit family. As to quaternary structure, heterotetramer of two alpha and two beta subunits. Mg(2+) serves as cofactor.

The enzyme catalyses succinate + ATP + CoA = succinyl-CoA + ADP + phosphate. It catalyses the reaction GTP + succinate + CoA = succinyl-CoA + GDP + phosphate. It participates in carbohydrate metabolism; tricarboxylic acid cycle; succinate from succinyl-CoA (ligase route): step 1/1. Its function is as follows. Succinyl-CoA synthetase functions in the citric acid cycle (TCA), coupling the hydrolysis of succinyl-CoA to the synthesis of either ATP or GTP and thus represents the only step of substrate-level phosphorylation in the TCA. The beta subunit provides nucleotide specificity of the enzyme and binds the substrate succinate, while the binding sites for coenzyme A and phosphate are found in the alpha subunit. In Rhizobium leguminosarum bv. trifolii (strain WSM2304), this protein is Succinate--CoA ligase [ADP-forming] subunit beta.